Reading from the N-terminus, the 152-residue chain is D-aminoacyl-tRNA deacylase (152 aa).

The Gly-cisPro motif, important for rejection of L-amino acids motif lies at 142–143 (GP).

It belongs to the DTD family. As to quaternary structure, homodimer.

The protein resides in the cytoplasm. It catalyses the reaction glycyl-tRNA(Ala) + H2O = tRNA(Ala) + glycine + H(+). The catalysed reaction is a D-aminoacyl-tRNA + H2O = a tRNA + a D-alpha-amino acid + H(+). An aminoacyl-tRNA editing enzyme that deacylates mischarged D-aminoacyl-tRNAs. Also deacylates mischarged glycyl-tRNA(Ala), protecting cells against glycine mischarging by AlaRS. Acts via tRNA-based rather than protein-based catalysis; rejects L-amino acids rather than detecting D-amino acids in the active site. By recycling D-aminoacyl-tRNA to D-amino acids and free tRNA molecules, this enzyme counteracts the toxicity associated with the formation of D-aminoacyl-tRNA entities in vivo and helps enforce protein L-homochirality. The protein is D-aminoacyl-tRNA deacylase of Burkholderia lata (strain ATCC 17760 / DSM 23089 / LMG 22485 / NCIMB 9086 / R18194 / 383).